Consider the following 108-residue polypeptide: UPF0145 protein Tmel_1129 (108 aa).

This sequence belongs to the UPF0145 family.

This Thermosipho melanesiensis (strain DSM 12029 / CIP 104789 / BI429) protein is UPF0145 protein Tmel_1129.